The following is a 483-amino-acid chain: Glutamyl-tRNA(Gln) amidotransferase subunit A (483 aa).

Catalysis depends on charge relay system residues lysine 76 and serine 151. Serine 175 serves as the catalytic Acyl-ester intermediate.

Belongs to the amidase family. GatA subfamily. As to quaternary structure, heterotrimer of A, B and C subunits.

The enzyme catalyses L-glutamyl-tRNA(Gln) + L-glutamine + ATP + H2O = L-glutaminyl-tRNA(Gln) + L-glutamate + ADP + phosphate + H(+). Functionally, allows the formation of correctly charged Gln-tRNA(Gln) through the transamidation of misacylated Glu-tRNA(Gln) in organisms which lack glutaminyl-tRNA synthetase. The reaction takes place in the presence of glutamine and ATP through an activated gamma-phospho-Glu-tRNA(Gln). The chain is Glutamyl-tRNA(Gln) amidotransferase subunit A from Nitrosococcus oceani (strain ATCC 19707 / BCRC 17464 / JCM 30415 / NCIMB 11848 / C-107).